We begin with the raw amino-acid sequence, 170 residues long: Fimbrial protein (170 aa).

A propeptide spanning residues 1-7 is cleaved from the precursor; the sequence is MNTLQKG. Phe-8 carries the N-methylphenylalanine modification. A helical membrane pass occupies residues 8–28; that stretch reads FTLIELMIVIAIVGILAAVAL. Ser-70 carries an O-linked (Gal...) serine glycan. Ser-100 bears the O-(sn-1-glycerophosphoryl)serine mark. Cys-127 and Cys-163 are joined by a disulfide.

The protein belongs to the N-Me-Phe pilin family. As to quaternary structure, the pili are polar flexible filaments of about 5.4 nanometers diameter and 2.5 micrometers average length; they consist of only a single polypeptide chain arranged in a helical configuration of five subunits per turn in the assembled pilus. Post-translationally, O-linked glycan consists of GlcNAc-Gal disaccharide.

It localises to the fimbrium. The protein localises to the membrane. Major component of the type IV pilus (T4P) that plays a role in cellular adherence, microcolony formation as well as twitching motility. The protein is Fimbrial protein (pilE) of Neisseria meningitidis serogroup A / serotype 4A (strain DSM 15465 / Z2491).